The following is a 99-amino-acid chain: METLSFEFAAGQPARGKALVGVVGSGDLEVLLEPGQAGKLAIQVVTSVNGAEQRWQQLFERMFREQTPPALNIDIHDFGATPGVVRLRLEQGLEEVGHD.

The residue at position 25 (Ser-25) is an O-(phosphoribosyl dephospho-coenzyme A)serine.

It belongs to the MdcC family. Post-translationally, covalently binds the prosthetic group of malonate decarboxylase.

The protein localises to the cytoplasm. Its function is as follows. Subunit of malonate decarboxylase, it is an acyl carrier protein to which acetyl and malonyl thioester residues are bound via a 2'-(5''-phosphoribosyl)-3'-dephospho-CoA prosthetic group and turn over during the catalytic mechanism. The polypeptide is Malonate decarboxylase acyl carrier protein (Stutzerimonas stutzeri (strain A1501) (Pseudomonas stutzeri)).